The following is a 429-amino-acid chain: Glucose-6-phosphate isomerase (429 aa).

Glutamate 282 acts as the Proton donor in catalysis. Residues histidine 303 and lysine 418 contribute to the active site.

It belongs to the GPI family.

It localises to the cytoplasm. The catalysed reaction is alpha-D-glucose 6-phosphate = beta-D-fructose 6-phosphate. The protein operates within carbohydrate biosynthesis; gluconeogenesis. It participates in carbohydrate degradation; glycolysis; D-glyceraldehyde 3-phosphate and glycerone phosphate from D-glucose: step 2/4. In terms of biological role, catalyzes the reversible isomerization of glucose-6-phosphate to fructose-6-phosphate. In Mesomycoplasma hyopneumoniae (strain 232) (Mycoplasma hyopneumoniae), this protein is Glucose-6-phosphate isomerase.